The sequence spans 208 residues: Uracil phosphoribosyltransferase (208 aa).

Residues Arg78, Arg103, and 130–138 (DPMLATGGS) contribute to the 5-phospho-alpha-D-ribose 1-diphosphate site. Residues Ile193 and 198 to 200 (GDA) contribute to the uracil site. 5-phospho-alpha-D-ribose 1-diphosphate is bound at residue Asp199.

Belongs to the UPRTase family. The cofactor is Mg(2+).

The enzyme catalyses UMP + diphosphate = 5-phospho-alpha-D-ribose 1-diphosphate + uracil. It participates in pyrimidine metabolism; UMP biosynthesis via salvage pathway; UMP from uracil: step 1/1. Allosterically activated by GTP. Functionally, catalyzes the conversion of uracil and 5-phospho-alpha-D-ribose 1-diphosphate (PRPP) to UMP and diphosphate. This Aliivibrio salmonicida (strain LFI1238) (Vibrio salmonicida (strain LFI1238)) protein is Uracil phosphoribosyltransferase.